Consider the following 167-residue polypeptide: Transcription antitermination protein NusB (167 aa).

The protein belongs to the NusB family.

Functionally, involved in transcription antitermination. Required for transcription of ribosomal RNA (rRNA) genes. Binds specifically to the boxA antiterminator sequence of the ribosomal RNA (rrn) operons. In Nitrosomonas europaea (strain ATCC 19718 / CIP 103999 / KCTC 2705 / NBRC 14298), this protein is Transcription antitermination protein NusB.